We begin with the raw amino-acid sequence, 89 residues long: MAKKSKIAKLAKQRALVAKYADLRATLKAEGNYAALAELPKDSSPVRLRNRDLIDGRPRSFMRKFGMSRINFRELAHKGQIPGVKKASW.

The protein belongs to the universal ribosomal protein uS14 family. As to quaternary structure, part of the 30S ribosomal subunit. Contacts proteins S3 and S10.

Functionally, binds 16S rRNA, required for the assembly of 30S particles and may also be responsible for determining the conformation of the 16S rRNA at the A site. In Latilactobacillus sakei subsp. sakei (strain 23K) (Lactobacillus sakei subsp. sakei), this protein is Small ribosomal subunit protein uS14.